The primary structure comprises 145 residues: Plastocyanin, chloroplastic (145 aa).

A chloroplast-targeting transit peptide spans 1 to 48 (MASLMRKAAVAPAKATRTTVKASASLQRVAQAAGVAVAGFSLALSANA). A Plastocyanin-like domain is found at 49–145 (ANVKLGADSG…AGMVGKVIVQ (97 aa)). Positions 85, 130, 133, and 138 each coordinate Cu cation.

It belongs to the plastocyanin family. Cu(2+) is required as a cofactor.

It is found in the plastid. Its subcellular location is the chloroplast thylakoid membrane. Participates in electron transfer between P700 and the cytochrome b6-f complex in photosystem I. The protein is Plastocyanin, chloroplastic (PETE) of Tetradesmus obliquus (Green alga).